A 100-amino-acid polypeptide reads, in one-letter code: Small ribosomal subunit protein uS14 (100 aa).

The protein belongs to the universal ribosomal protein uS14 family. In terms of assembly, part of the 30S ribosomal subunit. Contacts proteins S3 and S10.

In terms of biological role, binds 16S rRNA, required for the assembly of 30S particles and may also be responsible for determining the conformation of the 16S rRNA at the A site. The sequence is that of Small ribosomal subunit protein uS14 from Parasynechococcus marenigrum (strain WH8102).